Consider the following 228-residue polypeptide: Sensory transduction protein RegX3 (228 aa).

One can recognise a Response regulatory domain in the interval 3–116; it reads SVLIVEDEES…ELIARIRAVL (114 aa). Aspartate 52 is subject to 4-aspartylphosphate. The segment at residues 129 to 228 is a DNA-binding region (ompR/PhoB-type); it reads DGVLEAGPVR…VRGLGYKLEG (100 aa).

Phosphorylated by SenX3.

Its function is as follows. Member of the two-component regulatory system SenX3/RegX3 involved in stress response. The system is involved in phosphate starvation response. Once phosphorylated by SenX3, activates the expression of the alkaline phosphatase phoA, the high-affinity phosphate transporter pstSCAB, phnDCE, phnF and senX3. May act as a negative regulator of NhaA. Acts by binding to a DNA motif consisting of an inverted repeat. In Mycolicibacterium smegmatis (strain ATCC 700084 / mc(2)155) (Mycobacterium smegmatis), this protein is Sensory transduction protein RegX3.